We begin with the raw amino-acid sequence, 632 residues long: Polyadenylate-binding protein, cytoplasmic and nuclear (632 aa).

Polar residues predominate over residues Met1–Glu11. The tract at residues Met1–Asp43 is disordered. Low complexity predominate over residues Ala31–Asp43. RRM domains lie at Ala52–Arg130, Gly140–Ser217, Thr233–Lys310, and Val336–Arg413. A PABC domain is found at Gln534–Asn615.

This sequence belongs to the polyadenylate-binding protein type-1 family.

It localises to the cytoplasm. Its subcellular location is the nucleus. In terms of biological role, binds the poly(A) tail of mRNA. Appears to be an important mediator of the multiple roles of the poly(A) tail in mRNA biogenesis, stability and translation. In the nucleus, involved in both mRNA cleavage and polyadenylation. Is also required for efficient mRNA export to the cytoplasm. Acts in concert with a poly(A)-specific nuclease (PAN) to affect poly(A) tail shortening, which may occur concomitantly with either nucleocytoplasmic mRNA transport or translational initiation. In the cytoplasm, stimulates translation initiation and regulates mRNA decay through translation termination-coupled poly(A) shortening, probably mediated by PAN. This is Polyadenylate-binding protein, cytoplasmic and nuclear (PAB1) from Scheffersomyces stipitis (strain ATCC 58785 / CBS 6054 / NBRC 10063 / NRRL Y-11545) (Yeast).